The chain runs to 89 residues: UPF0335 protein CCNA_03428 (89 aa).

It belongs to the UPF0335 family.

This Caulobacter vibrioides (strain NA1000 / CB15N) (Caulobacter crescentus) protein is UPF0335 protein CCNA_03428.